A 343-amino-acid chain; its full sequence is MSHQTGIKANAELLKFFGKCKDGKTRVLKVSIENEELRLVSHSDVKRDWEKDYDTLVRPLIEESTPCYILYRLDYKIPTGYAWLLMSWVPESATVRQKMLYASTKATLKLEFGSGHIKEELNATSKEETTLQGYQKHKVDFNTPAPLTSREEELAELRKTEVKTDFGIDTKQQTLGGINCPIADAVAQALHDMRRGGYNYLQFRIDLEEEKIHLVKADNIELTGLPAQIPTDHARYHLYIFKHHHEGNYLESVVFVYSMPGYSCSIRERMMYSSCKGPFSATIEKHGIQVAKKLEIDNGAELTEEFLHEELHPRKLNLRPQFSKPKGPPSRGAKRLTKPQAVE.

ADF-H domains lie at 4–139 and 177–312; these read QTGI…KHKV and GINC…EELH. Residues 314–343 are disordered; it reads RKLNLRPQFSKPKGPPSRGAKRLTKPQAVE.

It belongs to the actin-binding proteins ADF family. Twinfilin subfamily. As to quaternary structure, interacts with G-actin; ADP-actin form.

The protein resides in the cytoplasm. Its subcellular location is the cytoskeleton. It localises to the cell cortex. Functionally, actin-binding protein involved in motile and morphological processes. Inhibits actin polymerization, likely by sequestering G-actin. This chain is Twinfilin (twf), found in Anopheles gambiae (African malaria mosquito).